The chain runs to 938 residues: Probable outer membrane protein pmp15 (938 aa).

Positions 1-17 are cleaved as a signal peptide; that stretch reads MRFFCFGMLLPFTFVLA. An Autotransporter domain is found at 659 to 938; sequence DEEKGHAASL…YLNVASRMRF (280 aa).

Belongs to the PMP outer membrane protein family.

The protein resides in the secreted. The protein localises to the cell wall. Its subcellular location is the cell outer membrane. In Chlamydia pneumoniae (Chlamydophila pneumoniae), this protein is Probable outer membrane protein pmp15 (pmp15).